An 877-amino-acid chain; its full sequence is Probable sulfate permease C3H7.02 (877 aa).

The next 13 membrane-spanning stretches (helical) occupy residues 133–153, 161–181, 186–206, 221–241, 243–263, 292–312, 329–349, 384–404, 424–444, 461–481, 484–504, 518–538, and 543–563; these read WLVY…PQGM, LPAQ…CIFA, VSIG…ANVQ, LALL…GFII, FIPV…IMAG, LPHT…LYLV, VFFL…TAIS, LCAD…LEHI, LIAM…PATG, LGGI…TGAF, IPNA…IIPW, ALIF…NGIY, and LSAA…LGIL. The STAS domain maps to 594 to 747; it reads NLTVRDPPAG…SRSIEVGSAA (154 aa). Disordered stretches follow at residues 643–663 and 793–821; these read KASD…APEV and ADSD…TFSH. Basic and acidic residues predominate over residues 801–821; that stretch reads SDDKDKKVEGHRPSQDPTFSH.

This sequence belongs to the SLC26A/SulP transporter (TC 2.A.53) family.

It localises to the membrane. Its function is as follows. High affinity uptake of sulfate into the cell. The sequence is that of Probable sulfate permease C3H7.02 from Schizosaccharomyces pombe (strain 972 / ATCC 24843) (Fission yeast).